The primary structure comprises 523 residues: Metalloendopeptidase OMA1, mitochondrial (523 aa).

A mitochondrion-targeting transit peptide spans 1 to 45; it reads MSFIYGLQSAARNCFFFRFNLLTNWRKCNTQAVTSRDFHQVKINH. A propeptide spanning residues 46–143 is cleaved from the precursor; it reads IVNKSLGLGV…RSFHTSPRCQ (98 aa). Residues 144–195 lie on the Mitochondrial matrix side of the membrane; the sequence is AAPAPLLLMILKPAQKLLAIIVGRGIRKWWQALPPNKKELFKESLRKNKWKL. Positions 148 to 167 are cardiolipin-binding; that stretch reads PLLLMILKPAQKLLAIIVGR. Residues 165 to 195 form a stress-sensor region region; that stretch reads VGRGIRKWWQALPPNKKELFKESLRKNKWKL. A helical membrane pass occupies residues 196-216; that stretch reads FLGLSSFGLLFVVFYFTHLEV. His-327 is a binding site for Zn(2+). Glu-328 is an active-site residue. Zn(2+) contacts are provided by His-331 and Glu-392. Cys-407 and Cys-465 are oxidised to a cystine.

The protein belongs to the peptidase M48 family. Homooligomer. Zn(2+) is required as a cofactor. Autocatalytically cleaved in response to mitochondrial depolarization both at the N-terminus and C-terminus to generate the short active form (S-OMA1). Autocatalytic processing at the C-terminus takes place at residues 447-456. The S-OMA1 form is unstable. OMA1 pre-processing by AFG3L2 may participate in maturation before OMA1 autocatalytic cleavage. Degraded by YMEL1 in response to membrane depolarization. Protein turnover is regulated by prohibitin (PHB and PHB2), which promotes degradation of OMA1 in a cardiolipin-binding manner. Post-translationally, may form a redox-dependent disulfide bond. Exists in a semi-oxidized state and is activated by prolonged hypoxia.

The protein localises to the mitochondrion inner membrane. Its activity is regulated as follows. Protease activity is activated upon autocatalytic cleavage in response to mitochondrial depolarization. Its function is as follows. Metalloprotease that is part of the quality control system in the inner membrane of mitochondria. Activated in response to various mitochondrial stress, leading to the proteolytic cleavage of target proteins, such as OPA1, UQCC3 and DELE1. Involved in the fusion of the mitochondrial inner membranes by mediating cleavage of OPA1 at S1 position, generating the soluble OPA1 (S-OPA1), which cooperates with the membrane form (L-OPA1) to coordinate the fusion of mitochondrial inner membranes. Following stress conditions that induce loss of mitochondrial membrane potential, mediates cleavage of OPA1, leading to excess production of soluble OPA1 (S-OPA1) and negative regulation of mitochondrial fusion. Involved in mitochondrial safeguard in response to transient mitochondrial membrane depolarization (flickering) by catalyzing cleavage of OPA1, leading to excess production of S-OPA1, preventing mitochondrial hyperfusion. Also acts as a regulator of apoptosis: upon BAK and BAX aggregation, mediates cleavage of OPA1, leading to the remodeling of mitochondrial cristae and allowing the release of cytochrome c from mitochondrial cristae. In depolarized mitochondria, may also act as a backup protease for PINK1 by mediating PINK1 cleavage and promoting its subsequent degradation by the proteasome. May also cleave UQCC3 in response to mitochondrial depolarization. Also acts as an activator of the integrated stress response (ISR): in response to mitochondrial stress, mediates cleavage of DELE1 to generate the processed form of DELE1 (S-DELE1), which translocates to the cytosol and activates EIF2AK1/HRI to trigger the ISR. Its role in mitochondrial quality control is essential for regulating lipid metabolism as well as to maintain body temperature and energy expenditure under cold-stress conditions. Binds cardiolipin, possibly regulating its protein turnover. Required for the stability of the respiratory supercomplexes. This Bos taurus (Bovine) protein is Metalloendopeptidase OMA1, mitochondrial.